We begin with the raw amino-acid sequence, 92 residues long: MARSLKKNPFVANHLLRKIKNLNIKKEKKIIVTWSRASVIVPAMIGHTIAVHNGREHLPIYVTDRMVDHKLGEFAPTLLFQGHARNDKKSRR.

Belongs to the universal ribosomal protein uS19 family.

It localises to the plastid. The protein localises to the chloroplast. In terms of biological role, protein S19 forms a complex with S13 that binds strongly to the 16S ribosomal RNA. This is Small ribosomal subunit protein uS19c from Pinus koraiensis (Korean pine).